A 123-amino-acid chain; its full sequence is Large ribosomal subunit protein bL12 (123 aa).

Belongs to the bacterial ribosomal protein bL12 family. As to quaternary structure, homodimer. Part of the ribosomal stalk of the 50S ribosomal subunit. Forms a multimeric L10(L12)X complex, where L10 forms an elongated spine to which 2 to 4 L12 dimers bind in a sequential fashion. Binds GTP-bound translation factors.

Functionally, forms part of the ribosomal stalk which helps the ribosome interact with GTP-bound translation factors. Is thus essential for accurate translation. The sequence is that of Large ribosomal subunit protein bL12 from Parvibaculum lavamentivorans (strain DS-1 / DSM 13023 / NCIMB 13966).